The primary structure comprises 91 residues: uncharacterized protein (91 aa).

2 helical membrane passes run 5–27 (FFKY…TNFQ) and 47–69 (DFYH…FIFF).

It localises to the cell membrane. This is an uncharacterized protein from Archaeoglobus fulgidus (strain ATCC 49558 / DSM 4304 / JCM 9628 / NBRC 100126 / VC-16).